Consider the following 358-residue polypeptide: Biotin synthase (358 aa).

Residues 44-272 (NRVRLNYLVN…DSEVRAAAGR (229 aa)) enclose the Radical SAM core domain. [4Fe-4S] cluster is bound by residues cysteine 59, cysteine 63, and cysteine 66. [2Fe-2S] cluster-binding residues include cysteine 103, cysteine 136, cysteine 196, and arginine 267.

It belongs to the radical SAM superfamily. Biotin synthase family. Homodimer. The cofactor is [4Fe-4S] cluster. Requires [2Fe-2S] cluster as cofactor.

The enzyme catalyses (4R,5S)-dethiobiotin + (sulfur carrier)-SH + 2 reduced [2Fe-2S]-[ferredoxin] + 2 S-adenosyl-L-methionine = (sulfur carrier)-H + biotin + 2 5'-deoxyadenosine + 2 L-methionine + 2 oxidized [2Fe-2S]-[ferredoxin]. The protein operates within cofactor biosynthesis; biotin biosynthesis; biotin from 7,8-diaminononanoate: step 2/2. Its function is as follows. Catalyzes the conversion of dethiobiotin (DTB) to biotin by the insertion of a sulfur atom into dethiobiotin via a radical-based mechanism. The sequence is that of Biotin synthase from Cutibacterium acnes (strain DSM 16379 / KPA171202) (Propionibacterium acnes).